Consider the following 558-residue polypeptide: Alkaline/neutral invertase CINV2 (558 aa).

A phosphoserine mark is found at S16, S19, and S50. T79 bears the Phosphothreonine mark. S555 is modified (phosphoserine).

This sequence belongs to the glycosyl hydrolase 100 family.

It is found in the cytoplasm. The protein localises to the cytosol. It catalyses the reaction Hydrolysis of terminal non-reducing beta-D-fructofuranoside residues in beta-D-fructofuranosides.. Cytosolic invertase that may cleave sucrose into glucose and fructose, and that is involved in the regulation of root growth. May regulate sugar-mediated root development by controlling sucrose catabolism in root cells. This chain is Alkaline/neutral invertase CINV2, found in Arabidopsis thaliana (Mouse-ear cress).